The sequence spans 205 residues: Cerebellin-3 (205 aa).

An N-terminal signal peptide occupies residues 1–32; sequence MLGAKPHWLPGPLHSPGLPLVLVLLALGAGWA. The 139-residue stretch at 67 to 205 folds into the C1q domain; sequence APPGRVAFAA…SFSGFLIFPL (139 aa). The tract at residues 72 to 205 is necessary for interaction with CBLN3, and homotrimerization; that stretch reads VAFAAVRSHH…SFSGFLIFPL (134 aa). A glycan (N-linked (GlcNAc...) asparagine) is linked at N90.

In terms of assembly, heterohexamer; disulfide-linked heterotrimers. Interacts with CBLN1. May also form oligomers with CBLN2 and CBLN4.

Its subcellular location is the endoplasmic reticulum. It localises to the golgi apparatus. It is found in the cis-Golgi network. The protein localises to the secreted. The protein resides in the synapse. Its function is as follows. May be involved in synaptic functions in the CNS. This Homo sapiens (Human) protein is Cerebellin-3 (CBLN3).